We begin with the raw amino-acid sequence, 264 residues long: Short-chain dehydrogenase/reductase ucsE (264 aa).

A helical transmembrane segment spans residues 13–32 (LVVVVGGTSGLGFAVAQAAV). The NADP(+) site is built by L23, S43, and D74. N-linked (GlcNAc...) asparagine glycosylation occurs at N125. R130 and K139 together coordinate NADP(+). Catalysis depends on S157, which acts as the Proton donor. NADP(+) contacts are provided by V202 and T204.

This sequence belongs to the short-chain dehydrogenases/reductases (SDR) family. It depends on NADP(+) as a cofactor.

The protein localises to the membrane. The protein operates within mycotoxin biosynthesis. Its function is as follows. Short-chain dehydrogenase/reductase; part of the gene cluster that mediates the biosynthesis of UCS1025A, a member of the pyrrolizidinone family that acts as a strong telomerase inhibitor and displays potent antibacterial and antitumor properties. These compounds share a hemiaminal-containing pyrrolizidinone core fused with a gamma-lactone, giving a furopyrrolizidine that is connected to a decalin fragment. The polyketide synthase module (PKS) of the PKS-NRPS ucsA is responsible for the synthesis of the polyketide backbone via the condensation of an acetyl-CoA starter unit with 6 malonyl-CoA units. The downstream nonribosomal peptide synthetase (NRPS) module then amidates the carboxyl end of the polyketide with a 2S,3S-methylproline derived from L-isoleucine by the 2-oxoglutarate-dependent dioxygenase ucsF which converts L-isoleucine to (4S,5S)-4-methylpyrroline-5-carboxylate that is further converted to 2S,3S-methylproline by the pyrroline-5-carboxylate reductase ucsG. Reductive release of the completed aminoacyl polyketide from the assembly line can form the 3-pyrrolin-2-one structure via an intramolecular Knoevenagel reaction. Because ucsA lacks a designated enoylreductase (ER) domain, the required activity is provided the enoyl reductase ucsL. This keto acyclic precursor is the substrate of the Diels-Alderase ucsH, that catalyzes the Diels-Alder cycloaddition. Oxidation of the 3S-methyl group to a carboxylate by the cytochrome P450 monooxygenase ucsK allows an oxa-Michael cyclization that might involve the reductase/dehydrogenase ucsI and which furnishes the furopyrrolizidine. The oxidase ucsJ likely plays a critical role in stereoselective reduction of the C5-C6 double bond to afford the required R-configured carboxylate group. Further enolization and oxidation at C5 by an unidentified enzyme affords the last intermediate that can undergo oxa-Michael cyclization to yield UCS1025A. This is Short-chain dehydrogenase/reductase ucsE from Acremonium sp.